A 159-amino-acid polypeptide reads, in one-letter code: Serine-protein kinase RsbW (159 aa).

It belongs to the anti-sigma-factor family.

It catalyses the reaction L-seryl-[protein] + ATP = O-phospho-L-seryl-[protein] + ADP + H(+). It carries out the reaction L-threonyl-[protein] + ATP = O-phospho-L-threonyl-[protein] + ADP + H(+). Its function is as follows. Negative regulator of sigma-B activity. Phosphorylates and inactivates its specific antagonist protein, RsbV. Upon phosphorylation of RsbV, RsbW is released and binds to sigma-B, thereby blocking its ability to form an RNA polymerase holoenzyme (E-sigma-B). In Staphylococcus aureus (strain MRSA252), this protein is Serine-protein kinase RsbW.